The following is a 406-amino-acid chain: Nuclear hormone receptor family member nhr-133 (406 aa).

Residues 8–83 (SGPCEICEQP…VGMNSSKFQN (76 aa)) constitute a DNA-binding region (nuclear receptor). Residues 11–31 (CEICEQPAHGNHFGVLSCRAC) form an NR C4-type zinc finger. The NR C4-type; degenerate zinc-finger motif lies at 47–66 (DRVCRKGNCIGNDLYRCKIC). Positions 150–406 (YSWSPNHYPN…YSHPEMFEFS (257 aa)) constitute an NR LBD domain.

It belongs to the nuclear hormone receptor family.

The protein localises to the nucleus. Its function is as follows. Orphan nuclear receptor. The chain is Nuclear hormone receptor family member nhr-133 from Caenorhabditis elegans.